We begin with the raw amino-acid sequence, 421 residues long: UDP-glucuronic acid decarboxylase 1 (421 aa).

Over 1 to 19 (MVRTRIQRLLTGINRRMMK) the chain is Cytoplasmic. A helical transmembrane segment spans residues 20 to 40 (LLIALALIAYVASVWGNFVNM). The Lumenal segment spans residues 41–421 (SKSIQENGEQ…RVKKGRTRHN (381 aa)). The NAD(+) site is built by Gly-99, Phe-100, Val-101, Asp-120, Asn-121, Phe-123, Thr-124, Gly-125, Asp-145, and Val-146. Positions 150 and 151 each coordinate UDP-alpha-D-glucuronate. NAD(+) contacts are provided by Leu-160 and Ser-162. Lys-178 is a UDP-alpha-D-glucuronate binding site. NAD(+) is bound at residue Thr-179. Positions 186, 189, 192, and 193 each coordinate UDP-alpha-D-glucuronate. Residues Ala-201, Tyr-232, and Lys-236 each coordinate NAD(+). Tyr-232 acts as the Proton acceptor in catalysis. UDP-alpha-D-glucuronate is bound by residues Tyr-246, Gln-249, and Glu-250. 3 residues coordinate NAD(+): Thr-262, His-268, and Arg-273. N-linked (GlcNAc...) asparagine glycans are attached at residues Asn-317 and Asn-386. The disordered stretch occupies residues 400 to 421 (ANNQYIPKPKPARVKKGRTRHN). Residues 409–421 (KPARVKKGRTRHN) show a composition bias toward basic residues.

It belongs to the NAD(P)-dependent epimerase/dehydratase family. UDP-glucuronic acid decarboxylase subfamily. Homodimer and homotetramer. It depends on NAD(+) as a cofactor.

It localises to the golgi apparatus. It is found in the golgi stack membrane. It carries out the reaction UDP-alpha-D-glucuronate + H(+) = UDP-alpha-D-xylose + CO2. Its pathway is nucleotide-sugar biosynthesis; UDP-alpha-D-xylose biosynthesis; UDP-alpha-D-xylose from UDP-alpha-D-glucuronate: step 1/1. In terms of biological role, catalyzes the NAD-dependent decarboxylation of UDP-glucuronic acid to UDP-xylose. Necessary for the biosynthesis of the core tetrasaccharide in glycosaminoglycan biosynthesis. In Xenopus tropicalis (Western clawed frog), this protein is UDP-glucuronic acid decarboxylase 1 (uxs1).